A 44-amino-acid polypeptide reads, in one-letter code: Photosystem I reaction center subunit IX (44 aa).

A helical membrane pass occupies residues 7–27 (YLSVAPVLSTLSLGFLTGFLI).

Belongs to the PsaJ family.

It is found in the plastid membrane. In terms of biological role, may help in the organization of the PsaE and PsaF subunits. The sequence is that of Photosystem I reaction center subunit IX from Cuscuta gronovii (Common dodder).